The following is a 90-amino-acid chain: MGFRLPGIRKASFSANQASSKAVDVEKGYLAVYVGEKMRRFVIPVSYLNKPSFQDLLSQAEEEFGYHHPNGGLTIPCSEDVFQHITSFLN.

Belongs to the ARG7 family.

This is Auxin-induced protein 6B from Glycine max (Soybean).